A 1110-amino-acid polypeptide reads, in one-letter code: Restriction of telomere capping protein 1 (1110 aa).

The segment at 27–57 (TSSSTPQSHEISPSPSSSLSSSRSRRNKQSF) is disordered. A compositionally biased stretch (low complexity) spans 38 to 48 (SPSPSSSLSSS). 7 WD repeats span residues 132 to 171 (VGSK…QGKQ), 177 to 216 (DHKR…SKPS), 223 to 267 (MRSD…GNGN), 277 to 316 (LHTG…SNSS), 348 to 390 (EAQS…VPKQ), 393 to 426 (HSKK…NSYN), and 439 to 483 (LDDL…SEAE). Residues 552 to 574 (NISTRPKLTRNTSQTTQDSSVSY) show a composition bias toward polar residues. A disordered region spans residues 552-575 (NISTRPKLTRNTSQTTQDSSVSYG). One copy of the WD 8 repeat lies at 637–675 (PDGFTMIDVCLLNASTAASVNSNRTCQVWRLLAVSLQEH). Disordered regions lie at residues 692 to 714 (QMEQ…TDSM), 734 to 755 (SSFG…RTSS), and 779 to 819 (FKEK…SNQE). A compositionally biased stretch (polar residues) spans 734-743 (SSFGTGSQIN). Residues 791-813 (PEDKEKQERGKAEDQETENDKKS) show a composition bias toward basic and acidic residues. A WD 9 repeat occupies 860–906 (SSHTFSSSIASSPQPIRGQIPPKQQLATTRESPVHNWLDQKKNELFR). The RING-type; degenerate zinc-finger motif lies at 1062 to 1105 (CVYCNEPCKGLAVVVGLKCGHQGHFGCLKEWFIQDENMECPGGC).

It belongs to the WD repeat RTC1 family.

The protein localises to the vacuole. Functionally, may be involved in a process influencing telomere capping. In Candida tropicalis (strain ATCC MYA-3404 / T1) (Yeast), this protein is Restriction of telomere capping protein 1 (RTC1).